A 459-amino-acid polypeptide reads, in one-letter code: Argininosuccinate lyase (459 aa).

The protein belongs to the lyase 1 family. Argininosuccinate lyase subfamily.

The protein localises to the cytoplasm. The enzyme catalyses 2-(N(omega)-L-arginino)succinate = fumarate + L-arginine. It participates in amino-acid biosynthesis; L-arginine biosynthesis; L-arginine from L-ornithine and carbamoyl phosphate: step 3/3. This is Argininosuccinate lyase from Oceanobacillus iheyensis (strain DSM 14371 / CIP 107618 / JCM 11309 / KCTC 3954 / HTE831).